The primary structure comprises 70 residues: Small ribosomal subunit protein bS21 (70 aa).

It belongs to the bacterial ribosomal protein bS21 family.

This chain is Small ribosomal subunit protein bS21, found in Neisseria gonorrhoeae (strain ATCC 700825 / FA 1090).